The following is a 392-amino-acid chain: Caveolae-associated protein 1 (392 aa).

Met1 bears the N-acetylmethionine mark. Basic and acidic residues predominate over residues 1–10; the sequence is MEDVTLHIVE. The tract at residues 1 to 45 is disordered; it reads MEDVTLHIVERPYSGYPDASSEGPEPTPGEARATEEPSGTGSDEL. Residues 1–100 are required for homotrimerization and for interaction with CAVIN2 and CAVIN3; it reads MEDVTLHIVE…IQGELSKLGK (100 aa). A phosphoserine mark is found at Ser21 and Ser38. Residue Thr40 is modified to Phosphothreonine. Ser42 and Ser48 each carry phosphoserine. Positions 54-64 are nuclear export signal; that stretch reads VLVLSLLDKII. A leucine-zipper 1 region spans residues 55–77; the sequence is LVLSLLDKIIGAVDQIQLTQAQL. Lys118 participates in a covalent cross-link: Glycyl lysine isopeptide (Lys-Gly) (interchain with G-Cter in SUMO2). Ser120 bears the Phosphoserine mark. A Glycyl lysine isopeptide (Lys-Gly) (interchain with G-Cter in SUMO2) cross-link involves residue Lys124. The tract at residues 138–154 is nuclear localization signal; that stretch reads KKLEVNEAELLRRRNFK. A Phosphotyrosine modification is found at Tyr158. Lys163 is covalently cross-linked (Glycyl lysine isopeptide (Lys-Gly) (interchain with G-Cter in SUMO1); alternate). Lys163 participates in a covalent cross-link: Glycyl lysine isopeptide (Lys-Gly) (interchain with G-Cter in SUMO2); alternate. A Glycyl lysine isopeptide (Lys-Gly) (interchain with G-Cter in SUMO2) cross-link involves residue Lys167. The interval 168-188 is leucine-zipper 2; that stretch reads LSVSKSLKESEALPEKEGDEL. 2 positions are modified to phosphoserine: Ser169 and Ser171. Residue Lys172 forms a Glycyl lysine isopeptide (Lys-Gly) (interchain with G-Cter in SUMO2) linkage. Residues Ser173 and Ser177 each carry the phosphoserine modification. The span at 173–183 shows a compositional bias: basic and acidic residues; that stretch reads SLKESEALPEK. The segment at 173 to 198 is disordered; that stretch reads SLKESEALPEKEGDELGEGERPEEDA. Acidic residues predominate over residues 184 to 198; that stretch reads EGDELGEGERPEEDA. A coiled-coil region spans residues 201–284; the sequence is IELSSDEAVE…RMNKLGTRLV (84 aa). Phosphoserine is present on residues Ser204 and Ser205. The segment at 235–251 is nuclear localization signal; sequence KKAFSKEKMEKTKVRTR. Residues 259-299 form a leucine-zipper 3 region; sequence LKTKENLEKTRHTLEKRMNKLGTRLVPVERREKLKTSRDKL. A Phosphoserine modification is found at Ser302. Thr304 is modified (phosphothreonine). A Phosphotyrosine modification is found at Tyr310. A Glycyl lysine isopeptide (Lys-Gly) (interchain with G-Cter in SUMO2) cross-link involves residue Lys328. Residues 347 to 367 form a disordered region; the sequence is GPDDDEVGAERGAETDLLRGS. Over residues 354–363 the composition is skewed to basic and acidic residues; sequence GAERGAETDL. Phosphoserine is present on residues Ser367, Ser368, Ser381, Ser389, and Ser391.

The protein belongs to the CAVIN family. As to quaternary structure, component of the CAVIN complex composed of CAVIN1, CAVIN2, CAVIN3 and CAVIN4. Interacts with RNA polymerase I subunit POLR1A/RPA1 and TTF1. Binds the 3' end of pre-rRNA. Interacts with transcription factor ZNF148. Interacts with LIPE in the adipocyte cytoplasm. Interacts with CAV1, CAV3, CAVIN2, CAVIN3 and CAVIN4. In terms of processing, phosphorylated. Present in active and inactive forms. Changes in phosphorylation pattern may alter activity. Phosphorylation at Tyr-158 is essential for its function in the regulation of ribosomal transcriptional activity. Post-translationally, monoubiquitinated. In terms of tissue distribution, expressed in the adipocyte (at protein level). Expressed in all striated and smooth muscles tested including diaphragm, esophageal striated muscle, fibroblast, endocardial endothelium, epicardial mesothelium, intestinal smooth muscle, masseter, soleus muscle, vascular smooth muscle and white gastrocnemius muscle (at protein level). Expressed in the endothelium and perineural sheath (at protein level). Not expressed in hepatocytes.

The protein resides in the membrane. The protein localises to the caveola. It localises to the cell membrane. Its subcellular location is the microsome. It is found in the endoplasmic reticulum. The protein resides in the cytoplasm. The protein localises to the cytosol. It localises to the mitochondrion. Its subcellular location is the nucleus. Functionally, plays an important role in caveolae formation and organization. Essential for the formation of caveolae in all tissues. Core component of the CAVIN complex which is essential for recruitment of the complex to the caveolae in presence of calveolin-1 (CAV1). Essential for normal oligomerization of CAV1. Promotes ribosomal transcriptional activity in response to metabolic challenges in the adipocytes and plays an important role in the formation of the ribosomal transcriptional loop. Dissociates transcription complexes paused by DNA-bound TTF1, thereby releasing both RNA polymerase I and pre-RNA from the template. The caveolae biogenesis pathway is required for the secretion of proteins such as GASK1A. In Rattus norvegicus (Rat), this protein is Caveolae-associated protein 1.